The sequence spans 166 residues: 2S seed storage protein 4 (166 aa).

Residues 1–21 form the signal peptide; it reads MANKLFLVCAALALCFILTNA. Propeptides lie at residues 22–37 and 73–88; these read SVYR…DASN and GPSL…DIEN.

It belongs to the 2S seed storage albumins family. In terms of assembly, the mature protein consists of a small and a large chain linked by disulfide bonds.

Its function is as follows. This is a 2S seed storage protein. The chain is 2S seed storage protein 4 (AT2S4) from Arabidopsis thaliana (Mouse-ear cress).